A 297-amino-acid chain; its full sequence is UBX domain-containing protein 1 (297 aa).

Alanine 2 bears the N-acetylalanine mark. The 41-residue stretch at 2–42 (AELTALESLIEMGFPKGRAEKALALTGNQGIEAAMDWLMEH) folds into the UBA domain. Positions 40-210 (MEHEDDPDVD…PSREPPTKRE (171 aa)) are disordered. The interval 43–297 (EDDPDVDEPL…VLIVAKKCPG (255 aa)) is interaction with BRCA1. 2 stretches are compositionally biased toward basic and acidic residues: residues 86–122 (LTEE…ERER) and 137–177 (RLQE…ERAK). Residues 86–176 (LTEEERQEQT…KIERDKAERA (91 aa)) are a coiled coil. Residues 187-199 (PSPPATEPGPVPS) show a composition bias toward pro residues. Phosphoserine is present on serine 199. Serine 200 carries the post-translational modification Phosphoserine; by MAPK12. Threonine 207 and threonine 229 each carry phosphothreonine. The 83-residue stretch at 209–291 (REYDQCRIQV…GLVPSAVLIV (83 aa)) folds into the UBX domain. Serine 270 is modified (phosphoserine).

In terms of assembly, component of a complex required to couple retrotranslocation, ubiquitination and deglycosylation composed of NGLY1, SAKS1, AMFR, VCP and RAD23B. Interacts with HOMER2. Interacts directly with VCP. Interacts with BRCA1 and BARD1; interaction takes place when BRCA1 is not autoubiquitinated bur is strongly enhanced in the presence of autoubiquitinated BRCA1.

It localises to the cytoplasm. In terms of biological role, ubiquitin-binding protein that interacts with the BRCA1-BARD1 heterodimer, and regulates its activity. Specifically binds 'Lys-6'-linked polyubiquitin chains. Interaction with autoubiquitinated BRCA1, leads to inhibit the E3 ubiquitin-protein ligase activity of the BRCA1-BARD1 heterodimer. Component of a complex required to couple deglycosylation and proteasome-mediated degradation of misfolded proteins in the endoplasmic reticulum that are retrotranslocated in the cytosol. The polypeptide is UBX domain-containing protein 1 (UBXN1) (Bos taurus (Bovine)).